The chain runs to 262 residues: uncharacterized protein (262 aa).

2 disordered regions span residues 1-30 (MGKK…KKEK) and 232-262 (EEEE…DMEE). 3 stretches are compositionally biased toward acidic residues: residues 9-21 (NEDG…ETES), 232-245 (EEEE…EETD), and 253-262 (EEDEDEDMEE).

This is an uncharacterized protein from Caenorhabditis elegans.